A 359-amino-acid polypeptide reads, in one-letter code: Transcription factor MafA (359 aa).

A Phosphoserine modification is found at S14. K32 participates in a covalent cross-link: Glycyl lysine isopeptide (Lys-Gly) (interchain with G-Cter in SUMO2). Disordered stretches follow at residues 40-105 (RFCH…VGGA) and 172-226 (GGGA…AGHH). The span at 46–73 (PPGSLSSTPLSTPCSSVPSSPSFCAPSP) shows a compositional bias: low complexity. S49 carries the post-translational modification Phosphoserine. 2 positions are modified to phosphothreonine: T53 and T57. S61 and S65 each carry phosphoserine. A compositionally biased stretch (gly residues) spans 74-84 (GTGGGAGGGGS). Residues 181–209 (GHHHGAHHTAHHHHSAHHHHHHHHHHGGS) show a composition bias toward basic residues. The segment covering 210–224 (GHHGGGAGHGGGGAG) has biased composition (gly residues). A basic motif region spans residues 260-285 (RLKQKRRTLKNRGYAQSCRFKRVQQR). The region spanning 260-323 (RLKQKRRTLK…DLYKEKYEKL (64 aa)) is the bZIP domain. Residues 288 to 309 (LESEKCQLQSQVEQLKLEVGRL) form a leucine-zipper region. Positions 322–359 (KLAGRGGPGGAGGAGFPREPSPAQAGPGAAKGAPDFFL) are disordered. The span at 325-336 (GRGGPGGAGGAG) shows a compositional bias: gly residues. The span at 343 to 359 (PAQAGPGAAKGAPDFFL) shows a compositional bias: low complexity.

This sequence belongs to the bZIP family. Maf subfamily. In terms of assembly, forms homodimers. Interacts with NEUROD1 and PDX1. May interact with MAFB, FOS, JUN and PCAF. Ubiquitinated, leading to its degradation by the proteasome. In terms of processing, phosphorylated at tyrosines. As to expression, expressed in brain, lung, spleen, pancreas and kidney. In the pancreas, expressed in the insulin-producing beta-cells of the islets of Langerhans (at protein level). Also expressed in the eye.

The protein localises to the nucleus. Transcriptional factor that activates insulin gene expression. Acts synergistically with NEUROD1/BETA2 and PDX1. Binds the insulin enhancer C1/RIPE3b element. Binds to consensus TRE-type MARE 5'-TGCTGACTCAGCA-3' DNA sequence. This Mus musculus (Mouse) protein is Transcription factor MafA (Mafa).